We begin with the raw amino-acid sequence, 202 residues long: dITP/XTP pyrophosphatase (202 aa).

11 to 16 (TNNANK) serves as a coordination point for substrate. The active-site Proton acceptor is the D73. D73 contributes to the Mg(2+) binding site. Residues S74, 155–158 (FGYD), K178, and 183–184 (HR) each bind substrate.

The protein belongs to the HAM1 NTPase family. Homodimer. Mg(2+) serves as cofactor.

It catalyses the reaction XTP + H2O = XMP + diphosphate + H(+). The catalysed reaction is dITP + H2O = dIMP + diphosphate + H(+). The enzyme catalyses ITP + H2O = IMP + diphosphate + H(+). Its function is as follows. Pyrophosphatase that catalyzes the hydrolysis of nucleoside triphosphates to their monophosphate derivatives, with a high preference for the non-canonical purine nucleotides XTP (xanthosine triphosphate), dITP (deoxyinosine triphosphate) and ITP. Seems to function as a house-cleaning enzyme that removes non-canonical purine nucleotides from the nucleotide pool, thus preventing their incorporation into DNA/RNA and avoiding chromosomal lesions. The protein is dITP/XTP pyrophosphatase of Lactiplantibacillus plantarum (strain ATCC BAA-793 / NCIMB 8826 / WCFS1) (Lactobacillus plantarum).